Consider the following 339-residue polypeptide: Protein H339R (339 aa).

The protein belongs to the asfivirus H339R family. In terms of assembly, interacts with host NACA (alpha chain of nascent polypeptide-associated complex).

Its subcellular location is the host cytoplasm. The protein resides in the host nucleus. The polypeptide is Protein H339R (African swine fever virus (isolate Tick/Malawi/Lil 20-1/1983) (ASFV)).